The sequence spans 340 residues: Phosphoribosylformylglycinamidine cyclo-ligase (340 aa).

It belongs to the AIR synthase family.

It is found in the cytoplasm. The catalysed reaction is 2-formamido-N(1)-(5-O-phospho-beta-D-ribosyl)acetamidine + ATP = 5-amino-1-(5-phospho-beta-D-ribosyl)imidazole + ADP + phosphate + H(+). The protein operates within purine metabolism; IMP biosynthesis via de novo pathway; 5-amino-1-(5-phospho-D-ribosyl)imidazole from N(2)-formyl-N(1)-(5-phospho-D-ribosyl)glycinamide: step 2/2. In Streptococcus pyogenes serotype M3 (strain ATCC BAA-595 / MGAS315), this protein is Phosphoribosylformylglycinamidine cyclo-ligase.